A 199-amino-acid chain; its full sequence is MSKLLVINGSVIPSDKSNSHEMARIFLEEYKKVNPNDEIIELDLNKLVVGTNVLTTETFSTYWGEEEGMKYINQLKDVDKLLVIAPMYNFHVSGMLKNYIDHVALANQTFSYKYATKGASIGLLDKLKVQILATQGAPKGWYPWGDHVAYLKGTWEFMGAKVAEPILLAGVKVEPLSTQSPKEIVSSITSDLIAAAKKF.

Residues S10, 17-19, and 87-90 each bind FMN; these read SNS and MYNF.

It belongs to the azoreductase type 1 family. Homodimer. The cofactor is FMN.

It carries out the reaction 2 a quinone + NADH + H(+) = 2 a 1,4-benzosemiquinone + NAD(+). The catalysed reaction is N,N-dimethyl-1,4-phenylenediamine + anthranilate + 2 NAD(+) = 2-(4-dimethylaminophenyl)diazenylbenzoate + 2 NADH + 2 H(+). Its function is as follows. Quinone reductase that provides resistance to thiol-specific stress caused by electrophilic quinones. Functionally, also exhibits azoreductase activity. Catalyzes the reductive cleavage of the azo bond in aromatic azo compounds to the corresponding amines. The protein is FMN-dependent NADH:quinone oxidoreductase 1 of Mesoplasma florum (strain ATCC 33453 / NBRC 100688 / NCTC 11704 / L1) (Acholeplasma florum).